A 171-amino-acid polypeptide reads, in one-letter code: MIKSILIINNHGKPRLIKFYEHYSEEKQQQIIRELFLLVSKRTERSCNFLEIGNNSNIFDKDTKIIYRHYATLFFIFCVDSSESELSIIDLIQTFVESLDKCFENVCELDLIFHIDKVHYILDEMVMGGLVLETNPTIIFSNYEIQNKLEKAENPLLSGLAGVMQTIKPNK.

This sequence belongs to the adaptor complexes small subunit family. As to quaternary structure, adaptor protein complex 3 (AP-3) is a heterotetramer composed of two large adaptins (delta-type subunit and beta-type subunit), a medium adaptin (mu-type subunit) and a small adaptin (sigma-type subunit).

It localises to the endosome membrane. Functionally, part of the AP-3 complex, an adaptor-related complex which is essential for the compartmentalization of the endocytic pathway. This Dictyostelium discoideum (Social amoeba) protein is AP-3 complex subunit sigma (ap3s1).